Here is a 272-residue protein sequence, read N- to C-terminus: Tryptophan synthase alpha chain (272 aa).

Residues E49 and D60 each act as proton acceptor in the active site.

It belongs to the TrpA family. In terms of assembly, tetramer of two alpha and two beta chains.

The enzyme catalyses (1S,2R)-1-C-(indol-3-yl)glycerol 3-phosphate + L-serine = D-glyceraldehyde 3-phosphate + L-tryptophan + H2O. It functions in the pathway amino-acid biosynthesis; L-tryptophan biosynthesis; L-tryptophan from chorismate: step 5/5. In terms of biological role, the alpha subunit is responsible for the aldol cleavage of indoleglycerol phosphate to indole and glyceraldehyde 3-phosphate. This chain is Tryptophan synthase alpha chain, found in Methylibium petroleiphilum (strain ATCC BAA-1232 / LMG 22953 / PM1).